Consider the following 60-residue polypeptide: Large ribosomal subunit protein uL30 (60 aa).

Belongs to the universal ribosomal protein uL30 family. As to quaternary structure, part of the 50S ribosomal subunit.

This Shewanella baltica (strain OS223) protein is Large ribosomal subunit protein uL30.